A 62-amino-acid chain; its full sequence is MRCLPVFIILLLLIPSAPSVDAQPTTKDDVPLASLHDNAKRALQMFWNKRDCCPAKLLCCNP.

The first 22 residues, methionine 1 to alanine 22, serve as a signal peptide directing secretion. Residues glutamine 23 to asparagine 48 constitute a propeptide that is removed on maturation.

The protein belongs to the conotoxin T superfamily. Post-translationally, contains 2 disulfide bonds that can be either 'C1-C3, C2-C4' or 'C1-C4, C2-C3', since these disulfide connectivities have been observed for conotoxins with cysteine framework V (for examples, see AC P0DQQ7 and AC P81755). Expressed by the venom duct.

The protein localises to the secreted. Functionally, mu-conotoxins block voltage-gated sodium channels (Nav). This toxin inhibits tetrodotoxin(TTX)-sensitive sodium channels, but does not affect TTX-resistant sodium channels. Reduces the amplitude of currents without changing the activation and inactivation kinetics of currents. This Conus litteratus (Lettered cone) protein is Mu-conotoxin Lt5d.